Reading from the N-terminus, the 28-residue chain is GLLDVVKGAAKNLLASALDKLKCKVTGC.

A disulfide bridge connects residues cysteine 23 and cysteine 28.

Expressed by the skin glands.

Its subcellular location is the secreted. Functionally, has antibacterial activity against the Gram positive bacterium L.lactis. This is Ranatuerin-2AVa from Rana arvalis (Moor frog).